The sequence spans 556 residues: Formate--tetrahydrofolate ligase (556 aa).

ATP is bound at residue 65–72 (TPAGEGKS).

This sequence belongs to the formate--tetrahydrofolate ligase family.

The enzyme catalyses (6S)-5,6,7,8-tetrahydrofolate + formate + ATP = (6R)-10-formyltetrahydrofolate + ADP + phosphate. It participates in one-carbon metabolism; tetrahydrofolate interconversion. This Streptococcus pneumoniae (strain 70585) protein is Formate--tetrahydrofolate ligase.